A 49-amino-acid polypeptide reads, in one-letter code: Glycolactin (49 aa).

This sequence belongs to the pancreatic ribonuclease family. Glycosylated. As to expression, milk.

The protein localises to the secreted. Manifests poly C-specific RNase activity toward yeast tRNA, elicits a dose-dependent inhibition of cell-free translation, inhibits formation of superoxide ions in vitro and inhibits the hemagglutinating activities of soybean lectin and Ricinus communis agglutinin 120. Inhibits HIV-1 reverse transcriptase. In Bos taurus (Bovine), this protein is Glycolactin.